The chain runs to 319 residues: Olfactory receptor 5B21 (319 aa).

The Extracellular portion of the chain corresponds to 1 to 26; it reads MTSMENITEVTEFILLGLTDDPNLQV. Residue Asn6 is glycosylated (N-linked (GlcNAc...) asparagine). Residues 27 to 47 form a helical membrane-spanning segment; sequence PLLLIFLFIYLVTLIGNGGMM. Residues 48 to 55 lie on the Cytoplasmic side of the membrane; sequence VIIFSDSH. A helical transmembrane segment spans residues 56–76; it reads LHTPMYFFLSNLSFVDLGYSS. Residues 77-100 are Extracellular-facing; it reads AVAPKMVAALQSGNKVISYNGCAA. Cys98 and Cys190 form a disulfide bridge. A helical membrane pass occupies residues 101–121; it reads QFFFFVGFATVECYLLASMAY. The Cytoplasmic portion of the chain corresponds to 122–134; that stretch reads DRHAAVCRPLHYT. A helical membrane pass occupies residues 135 to 155; that stretch reads TTMTTGVCTILTIGSYTCGFL. At 156 to 197 the chain is on the extracellular side; the sequence is NASIHAADTFKLSFCGSNKINHFFCDIPPLLALACSSTHISK. Residues 198–218 form a helical membrane-spanning segment; the sequence is LVVFFVVGFNVFFTLLVIIIS. The Cytoplasmic portion of the chain corresponds to 219 to 238; the sequence is YFFIYIAIQNMKSSEGRKKA. Residues 239-259 form a helical membrane-spanning segment; the sequence is FSTCASHLTAVSIFYGTIIFM. Over 260-272 the chain is Extracellular; the sequence is YLQPSSGQSMDTD. Residues 273 to 293 traverse the membrane as a helical segment; that stretch reads KIASVFYTVVIPMLNPLIYSL. Over 294–319 the chain is Cytoplasmic; it reads RNREVKSALWKILNRFYPASFSVSRK.

The protein belongs to the G-protein coupled receptor 1 family.

It is found in the cell membrane. In terms of biological role, odorant receptor. This is Olfactory receptor 5B21 from Mus musculus (Mouse).